The chain runs to 702 residues: Elongation factor G (702 aa).

Residues 8–196 enclose the tr-type G domain; sequence ERYRNIGISA…MKAIIWDEAS (189 aa). GTP is bound by residues 17–24, 88–92, and 142–145; these read AHIDAGKT, DTPGH, and NKMD.

Belongs to the TRAFAC class translation factor GTPase superfamily. Classic translation factor GTPase family. EF-G/EF-2 subfamily.

The protein localises to the cytoplasm. In terms of biological role, catalyzes the GTP-dependent ribosomal translocation step during translation elongation. During this step, the ribosome changes from the pre-translocational (PRE) to the post-translocational (POST) state as the newly formed A-site-bound peptidyl-tRNA and P-site-bound deacylated tRNA move to the P and E sites, respectively. Catalyzes the coordinated movement of the two tRNA molecules, the mRNA and conformational changes in the ribosome. The polypeptide is Elongation factor G (fusA) (Thiomonas delicata (Thiomonas cuprina)).